The following is a 332-amino-acid chain: RNA polymerase sigma-B factor (332 aa).

The Polymerase core binding signature appears at 125-138 (DLIQEGALGLERGV). The segment at residues 294 to 313 (LVQISQRMGISRERVRQVEK) is a DNA-binding region (H-T-H motif).

It belongs to the sigma-70 factor family.

Its function is as follows. Sigma factors are initiation factors that promote the attachment of RNA polymerase to specific initiation sites and are then released. In Nostoc sp. (strain PCC 7120 / SAG 25.82 / UTEX 2576), this protein is RNA polymerase sigma-B factor (sigB).